A 107-amino-acid polypeptide reads, in one-letter code: Lipid-anchored protein YDL012C (107 aa).

The segment covering methionine 1–arginine 18 has biased composition (polar residues). The interval methionine 1–asparagine 86 is disordered. Serine 2 carries the N-acetylserine modification. A Glycyl lysine isopeptide (Lys-Gly) (interchain with G-Cter in ubiquitin) cross-link involves residue lysine 13. The segment covering proline 35 to proline 81 has biased composition (low complexity).

The protein belongs to the CYSTM1 family.

The protein localises to the cell membrane. The polypeptide is Lipid-anchored protein YDL012C (Saccharomyces cerevisiae (strain ATCC 204508 / S288c) (Baker's yeast)).